Here is a 676-residue protein sequence, read N- to C-terminus: Probable LRR receptor-like serine/threonine-protein kinase At4g31250 (676 aa).

Positions 1-26 (MTRDDKFPIVYSLLLIVLLFVSPIYG) are cleaved as a signal peptide. Residues 27–242 (DGDADALLKF…LLPCRYTRPP (216 aa)) are Extracellular-facing. Residues Asn-42, Asn-73, and Asn-83 are each glycosylated (N-linked (GlcNAc...) asparagine). 5 LRR repeats span residues 98–122 (IRGL…IDGL), 123–146 (VSLA…LFSG), 148–171 (KALL…LGKL), 172–195 (PKLT…KQKN), and 197–218 (VTVN…GLMN). Asn-218 carries an N-linked (GlcNAc...) asparagine glycan. The helical transmembrane segment at 243–263 (FFTVFLLALTILAVVVLITVF) threads the bilayer. At 264–676 (LSVCILSRRQ…RAMTEEFSLM (413 aa)) the chain is on the cytoplasmic side. The segment covering 319 to 330 (TVQRDSTATSGA) has biased composition (polar residues). Residues 319-347 (TVQRDSTATSGAISVGGLSPDEDKRGDQR) are disordered. The Protein kinase domain occupies 366–640 (RASAEVLGSG…HEAVDRIEEV (275 aa)). Position 368 is a phosphoserine (Ser-368). ATP is bound by residues 372–380 (LGSGGFGSS) and Lys-394. A phosphoserine mark is found at Ser-446 and Ser-543. The tract at residues 641 to 676 (DRDAGGGQESVRSSYVTASDGDHRSSRAMTEEFSLM) is disordered.

The protein belongs to the protein kinase superfamily. Ser/Thr protein kinase family.

The protein resides in the membrane. The catalysed reaction is L-seryl-[protein] + ATP = O-phospho-L-seryl-[protein] + ADP + H(+). It carries out the reaction L-threonyl-[protein] + ATP = O-phospho-L-threonyl-[protein] + ADP + H(+). This chain is Probable LRR receptor-like serine/threonine-protein kinase At4g31250, found in Arabidopsis thaliana (Mouse-ear cress).